Reading from the N-terminus, the 37-residue chain is Large ribosomal subunit protein bL36 (37 aa).

This sequence belongs to the bacterial ribosomal protein bL36 family.

This chain is Large ribosomal subunit protein bL36, found in Trichodesmium erythraeum (strain IMS101).